We begin with the raw amino-acid sequence, 728 residues long: FAS1 domain-containing protein fsc1 (728 aa).

A signal peptide spans 1–21; the sequence is MNLQFRLYLLFILLFISFANG. Over 22-670 the chain is Vacuolar; sequence KNEYEDKSTS…TKRQNRWRIT (649 aa). 2 consecutive FAS1 domains span residues 29–151 and 154–285; these read STSI…DNII and PPPA…SSLI. Asn-89 carries N-linked (GlcNAc...) asparagine glycosylation. Residues Asn-404 and Asn-501 are each glycosylated (N-linked (GlcNAc...) asparagine). Residues 671-691 traverse the membrane as a helical segment; that stretch reads FISISGLLLSVGICVLCYKIY. Topologically, residues 692–728 are cytoplasmic; that stretch reads FKFFRNRFMNQGEREPLLAPADSDTMAGRRNSSSLSV.

The protein localises to the vacuole membrane. Its function is as follows. Required for the fusion of autophagosomes with the vacuole. The chain is FAS1 domain-containing protein fsc1 (fsc1) from Schizosaccharomyces pombe (strain 972 / ATCC 24843) (Fission yeast).